The following is a 210-amino-acid chain: Large ribosomal subunit protein bL25 (210 aa).

Residues 175 to 210 (IATILPPQQEEEIDSGEQQEAGQPDAAEGRETTPEE) are disordered. Basic and acidic residues predominate over residues 201–210 (AEGRETTPEE).

Belongs to the bacterial ribosomal protein bL25 family. CTC subfamily. Part of the 50S ribosomal subunit; part of the 5S rRNA/L5/L18/L25 subcomplex. Contacts the 5S rRNA. Binds to the 5S rRNA independently of L5 and L18.

In terms of biological role, this is one of the proteins that binds to the 5S RNA in the ribosome where it forms part of the central protuberance. The polypeptide is Large ribosomal subunit protein bL25 (Geobacillus kaustophilus (strain HTA426)).